We begin with the raw amino-acid sequence, 590 residues long: Ankyrin repeat-containing protein ITN1 (590 aa).

The interval 25-44 is disordered; it reads ENQNPMIDPSPTPSPSATAT. 7 ANK repeats span residues 73–102, 128–157, 163–192, 197–226, 231–260, 265–294, and 299–329; these read HNDT…SQME, LGET…RESI, SGYD…TLSQ, SNAT…NLLE, NNKN…QLAR, KGQT…AIVM, and SCNT…NANT. A run of 4 helical transmembrane segments spans residues 422-442, 460-480, 500-520, and 531-551; these read VTVV…TVPG, IFFI…VVQI, LMWL…YIVV, and VTVV…YYVV.

As to quaternary structure, interacts with REM19/RTV1. As to expression, expressed in roots, shoots, leaf vasculature and stems.

Its subcellular location is the cell membrane. Involved in salt stress tolerance. May act through abscisic acid (ABA) signaling pathways and promote reactive oxygen species (ROS) production. This is Ankyrin repeat-containing protein ITN1 from Arabidopsis thaliana (Mouse-ear cress).